The chain runs to 216 residues: MNPATQLADGIATLGLSITESNQARLLQYLALIQKWNRVHNLTAVREPEAMLALHVLDSLAVLPHIGGSRIADVGSGAGLPGIPVALARPEWRVVLVESNHKKAAFLQQARIELGLENVEVIGERMEGVRSNAGFNTVISRAFSDLADFVKLAGHLCARGEEQGTDCGRLVAMKGVYPHEELAQLPETFIVDNILSLTIPGLRAKRHLVVLKRAGQ.

Positions 75, 80, and 141 each coordinate S-adenosyl-L-methionine.

This sequence belongs to the methyltransferase superfamily. RNA methyltransferase RsmG family.

It is found in the cytoplasm. It carries out the reaction guanosine(527) in 16S rRNA + S-adenosyl-L-methionine = N(7)-methylguanosine(527) in 16S rRNA + S-adenosyl-L-homocysteine. In terms of biological role, specifically methylates the N7 position of guanine in position 527 of 16S rRNA. The polypeptide is Ribosomal RNA small subunit methyltransferase G (Nitrosospira multiformis (strain ATCC 25196 / NCIMB 11849 / C 71)).